A 120-amino-acid chain; its full sequence is uncharacterized protein (120 aa).

3 helical membrane passes run 20–39 (FFWP…CYLL), 52–71 (GSSL…LFSI), and 86–108 (ILVV…SIIG).

It is found in the cell membrane. This is an uncharacterized protein from Pasteurella multocida (strain Pm70).